The chain runs to 121 residues: Putative inactive aspartokinase 3 HI_1632 (121 aa).

The protein belongs to the aspartokinase family.

The polypeptide is Putative inactive aspartokinase 3 HI_1632 (Haemophilus influenzae (strain ATCC 51907 / DSM 11121 / KW20 / Rd)).